A 100-amino-acid polypeptide reads, in one-letter code: NADH-quinone oxidoreductase subunit K (100 aa).

3 helical membrane passes run 1 to 21 (MIGLNHYLIVSGLLFCIGLAG), 28 to 48 (ILLLFFSTEIMLNAINIGFVA), and 64 to 84 (FIISIAASEVAIGLGLVILWF).

This sequence belongs to the complex I subunit 4L family. NDH-1 is composed of 14 different subunits. Subunits NuoA, H, J, K, L, M, N constitute the membrane sector of the complex.

The protein localises to the cell inner membrane. The enzyme catalyses a quinone + NADH + 5 H(+)(in) = a quinol + NAD(+) + 4 H(+)(out). NDH-1 shuttles electrons from NADH, via FMN and iron-sulfur (Fe-S) centers, to quinones in the respiratory chain. The immediate electron acceptor for the enzyme in this species is believed to be ubiquinone. Couples the redox reaction to proton translocation (for every two electrons transferred, four hydrogen ions are translocated across the cytoplasmic membrane), and thus conserves the redox energy in a proton gradient. This is NADH-quinone oxidoreductase subunit K from Helicobacter pylori (strain ATCC 700392 / 26695) (Campylobacter pylori).